Consider the following 491-residue polypeptide: MNDNIKLTEQEIIRREKLKKYESLGIKTFKKFDHEKINIYSNEIVEKYNHFSKDELLEKQIKLIIAGRILTQRGPFIVIQDTNGKIQLYVDKKELEEQKETLALLDIGDIIYVKGTLMKTMKGELTIKVNFFDLLTKGLTPLAEKYHGLVDVEERYRKRYLDLISNPNIKEIFWTRTKVISKIRKFFDEQNFMEVETPMLHSILGGANARPFKTYHNSLSSSFNLRIATELPLKKLLVGGIDRVYEIGRIFRNEGIDTTHNPEFTSIEFYQAYSNLEIMMEQTENLIKFIAKELGLSKIKNHDVEIDLLADFKKINMVDAVSEATKVDFRNIDLDKAIEVAGRYKVKVEKYFKVGHIINELFELLIEKTLIQPTFVTGHPIEISPLAATSEDERFTERAELFINTKEYANMFTELNDPLDQRRRFEAQLEEKESGNEEASEIDESFLSALEYGLPPAGGCGIGIDRLVMLLTEKESIREVILFPTLKKKQV.

Mg(2+) is bound by residues Glu-400 and Glu-407.

This sequence belongs to the class-II aminoacyl-tRNA synthetase family. Homodimer. Mg(2+) serves as cofactor.

Its subcellular location is the cytoplasm. It catalyses the reaction tRNA(Lys) + L-lysine + ATP = L-lysyl-tRNA(Lys) + AMP + diphosphate. In Mycoplasmopsis pulmonis (strain UAB CTIP) (Mycoplasma pulmonis), this protein is Lysine--tRNA ligase 1.